The chain runs to 258 residues: Proteasome subunit alpha (258 aa).

This sequence belongs to the peptidase T1A family. The 20S proteasome core is composed of 14 alpha and 14 beta subunits that assemble into four stacked heptameric rings, resulting in a barrel-shaped structure. The two inner rings, each composed of seven catalytic beta subunits, are sandwiched by two outer rings, each composed of seven alpha subunits. The catalytic chamber with the active sites is on the inside of the barrel. Has a gated structure, the ends of the cylinder being occluded by the N-termini of the alpha-subunits. Is capped by the proteasome-associated ATPase, ARC.

The protein localises to the cytoplasm. It functions in the pathway protein degradation; proteasomal Pup-dependent pathway. The formation of the proteasomal ATPase ARC-20S proteasome complex, likely via the docking of the C-termini of ARC into the intersubunit pockets in the alpha-rings, may trigger opening of the gate for substrate entry. Interconversion between the open-gate and close-gate conformations leads to a dynamic regulation of the 20S proteasome proteolysis activity. Functionally, component of the proteasome core, a large protease complex with broad specificity involved in protein degradation. This chain is Proteasome subunit alpha, found in Nocardia farcinica (strain IFM 10152).